A 1072-amino-acid polypeptide reads, in one-letter code: E3 ubiquitin-protein ligase RNF31 (1072 aa).

Positions 1 to 485 (MPGEEEERAF…PEKQRQDKMR (485 aa)) are polyubiquitin-binding. The region spanning 71-142 (TLSTALNILE…SFPEGQEEPD (72 aa)) is the PUB domain. Residues 263-290 (QGTHLSPSLPASAQPRPQSTSLLALGDS) are disordered. Residues 265–280 (THLSPSLPASAQPRPQ) are compositionally biased toward polar residues. Residues 281–290 (STSLLALGDS) show a composition bias toward low complexity. RanBP2-type zinc fingers lie at residues 299–329 (SAHL…PRGC) and 350–379 (ARGR…PRLA). Phosphoserine is present on Ser383. Residues 409-438 (QSQVWYCIHCTFCNSSPGWVCVMCNRTSSP) form a RanBP2-type 3 zinc finger. The disordered stretch occupies residues 443-484 (HAPRPYASSLEKGPPKPGPPRRLSAPLPSSCGDPEKQRQDKM). Positions 463-472 (RRLSAPLPSS) are enriched in low complexity. Residue Ser466 is modified to Phosphoserine. Residues 475–484 (DPEKQRQDKM) are compositionally biased toward basic and acidic residues. The segment at 563 to 616 (GNLDEAVEECVRTRRRKVQELQSLGFGPEEGSLQALFQHGGDVSRALTELQRQR) is interaction with RBCK1. In terms of domain architecture, UBA spans 564 to 615 (NLDEAVEECVRTRRRKVQELQSLGFGPEEGSLQALFQHGGDVSRALTELQRQ). The interval 695-929 (LAQECAVCGW…KSLHGHHPRD (235 aa)) is TRIAD supradomain. Positions 699, 702, 717, 719, 722, and 725 each coordinate Zn(2+). An RING-type 1 zinc finger spans residues 699 to 749 (CAVCGWALPHNRMQALTSCECTICPDCFRQHFTIALKEKHITDMVCPACGR). Lys735 is covalently cross-linked ((Microbial infection) Glycyl lysine isopeptide (Lys-Gly) (interchain with G-Cter in ubiquitin)). Zn(2+)-binding residues include Cys744 and Cys747. The segment at 779-841 (ALFHKKLTEG…WEEQHRGRSC (63 aa)) adopts an IBR-type zinc-finger fold. Lys783 participates in a covalent cross-link: (Microbial infection) Glycyl lysine isopeptide (Lys-Gly) (interchain with G-Cter in ubiquitin). Residues Cys799, Cys802, Cys817, Cys820, Cys825, Cys828, His836, Cys841, Cys871, and Cys874 each coordinate Zn(2+). The segment at 871–901 (CPKCKFSYALARGGCMHFHCTQCRHQFCSGC) adopts an RING-type 2; atypical zinc-finger fold. Residue Lys875 forms a (Microbial infection) Glycyl lysine isopeptide (Lys-Gly) (interchain with G-Cter in ubiquitin) linkage. The active site involves Cys885. Zn(2+)-binding residues include Cys890, Cys893, Cys898, Cys901, Cys916, and His925. The interval 910–1072 (KCPEPNCRVK…LGQSIPRRRK (163 aa)) is LDD domain.

Belongs to the RBR family. Component of the LUBAC complex (linear ubiquitin chain assembly complex) which consists of SHARPIN, RBCK1 and RNF31. LUBAC has a MW of approximately 600 kDa suggesting a heteromultimeric assembly of its subunits. Associates with the TNF-R1 signaling complex (TNF-RSC) in a stimulation-dependent manner. Interacts (via the PUB domain) with OTULIN (via the PIM motif); the interaction is direct. Interacts (via the PUB domain) with VCP (via the PIM motif). Interacts (via the PUB domain) with SPATA2 (via the PIM motif); interaction is direct and bridges RNF31 and CYLD. Interacts with CYLD; the interaction is indirect and is mediated via SPATA2. Interacts with MUSK. Interacts with CARD11, promoting linear ubiquitination of BCL10. As to quaternary structure, (Microbial infection) Interacts with S.flexneri E3 ubiquitin-protein ligases IpaH1.4 and IpaH2.5, leading to its ubiquitination. Post-translationally, autoubiquitinated. Interaction with OTULIN is required to suppress formation of 'Met-1'-linked polyubiquitin chains and prevent subsequent inactivation of the LUBAC complex. Cleaved by caspase during apoptosis. In terms of processing, (Microbial infection) Ubiquitinated by S.flexneri E3 ubiquitin-protein ligases IpaH1.4 and IpaH2.5, leading to its degradation by the proteasome, thereby preventing formation of the bacterial ubiquitin coat and activation of innate immunity. Expressed in both normal and transformed breast epithelial cell lines.

The protein localises to the cytoplasm. The catalysed reaction is [E2 ubiquitin-conjugating enzyme]-S-ubiquitinyl-L-cysteine + [acceptor protein]-L-lysine = [E2 ubiquitin-conjugating enzyme]-L-cysteine + [acceptor protein]-N(6)-ubiquitinyl-L-lysine.. Its pathway is protein modification; protein ubiquitination. Its function is as follows. E3 ubiquitin-protein ligase component of the LUBAC complex which conjugates linear ('Met-1'-linked) polyubiquitin chains to substrates and plays a key role in NF-kappa-B activation and regulation of inflammation. LUBAC conjugates linear polyubiquitin to IKBKG and RIPK1 and is involved in activation of the canonical NF-kappa-B and the JNK signaling pathways. Linear ubiquitination mediated by the LUBAC complex interferes with TNF-induced cell death and thereby prevents inflammation. LUBAC is recruited to the TNF-R1 signaling complex (TNF-RSC) following polyubiquitination of TNF-RSC components by BIRC2 and/or BIRC3 and to conjugate linear polyubiquitin to IKBKG and possibly other components contributing to the stability of the complex. The LUBAC complex is also involved in innate immunity by conjugating linear polyubiquitin chains at the surface of bacteria invading the cytosol to form the ubiquitin coat surrounding bacteria. LUBAC is not able to initiate formation of the bacterial ubiquitin coat, and can only promote formation of linear polyubiquitins on pre-existing ubiquitin. Recruited to the surface of bacteria by RNF213, which initiates the bacterial ubiquitin coat. The bacterial ubiquitin coat acts as an 'eat-me' signal for xenophagy and promotes NF-kappa-B activation. Together with OTULIN, the LUBAC complex regulates the canonical Wnt signaling during angiogenesis. RNF31 is required for linear ubiquitination of BCL10, thereby promoting TCR-induced NF-kappa-B activation. Binds polyubiquitin of different linkage types. In Homo sapiens (Human), this protein is E3 ubiquitin-protein ligase RNF31.